A 516-amino-acid chain; its full sequence is RxLR effector protein PITG_15127 (516 aa).

The first 22 residues, 1–22 (MRLYSGAILCTIATLLISVSTA), serve as a signal peptide directing secretion. The RxLR-dEER motif lies at 48–63 (RFLRVSTQNTENGENR).

Belongs to the RxLR effector family.

It is found in the secreted. The protein localises to the host cell membrane. It localises to the host nucleus. Its subcellular location is the host cytoplasm. Functionally, effector that enhances P.infestans colonization of Nicotiana benthamiana leaves. This Phytophthora infestans (strain T30-4) (Potato late blight agent) protein is RxLR effector protein PITG_15127.